The chain runs to 232 residues: Peptide deformylase (232 aa).

Cys135 and His178 together coordinate Fe cation. Glu179 is an active-site residue. His182 contributes to the Fe cation binding site.

The protein belongs to the polypeptide deformylase family. Fe(2+) is required as a cofactor.

It catalyses the reaction N-terminal N-formyl-L-methionyl-[peptide] + H2O = N-terminal L-methionyl-[peptide] + formate. Its function is as follows. Removes the formyl group from the N-terminal Met of newly synthesized proteins. Requires at least a dipeptide for an efficient rate of reaction. N-terminal L-methionine is a prerequisite for activity but the enzyme has broad specificity at other positions. The protein is Peptide deformylase of Deinococcus radiodurans (strain ATCC 13939 / DSM 20539 / JCM 16871 / CCUG 27074 / LMG 4051 / NBRC 15346 / NCIMB 9279 / VKM B-1422 / R1).